The chain runs to 149 residues: Proline-rich acidic protein 1 (149 aa).

The signal sequence occupies residues 1 to 20 (MKRFLLATCLVAALLWEAGA). 2 disordered regions span residues 51–79 (EPLEKDNQLGPLLPEPKQKPAAAEEKRPD) and 97–122 (LQGPELDLDSIDHPMSDDVQDEEVPQ). The span at 66-79 (PKQKPAAAEEKRPD) shows a compositional bias: basic and acidic residues.

Interacts with MTTP. Interacts with MAD1L1. As to expression, predominantly expressed in the intestinal epithelial cells than in the liver (at protein level). Abundantly expressed in the uterus during late pregnancy by uterus epithelial cells. After birth expression rapidly decreases and is no longer found in the uterus by the third day. Also highly expressed in the small intestine where it shows a proximal-distal graded expression.

Its subcellular location is the secreted. The protein localises to the endoplasmic reticulum. In terms of biological role, lipid-binding protein which promotes lipid absorption by facilitating MTTP-mediated lipid transfer (mainly triglycerides and phospholipids) and MTTP-mediated apoB lipoprotein assembly and secretion. Protects the gastrointestinal epithelium from irradiation-induced apoptosis. May play an important role in maintaining normal growth homeostasis in epithelial cells. Involved in p53/TP53-dependent cell survival after DNA damage. The protein is Proline-rich acidic protein 1 (Prap1) of Mus musculus (Mouse).